The chain runs to 117 residues: Large ribosomal subunit protein bL20 (117 aa).

It belongs to the bacterial ribosomal protein bL20 family.

Its function is as follows. Binds directly to 23S ribosomal RNA and is necessary for the in vitro assembly process of the 50S ribosomal subunit. It is not involved in the protein synthesizing functions of that subunit. This is Large ribosomal subunit protein bL20 from Rickettsia bellii (strain OSU 85-389).